The chain runs to 167 residues: Inclusion membrane protein G (167 aa).

2 helical membrane passes run 33–57 (VVLA…AVLF) and 63–88 (VLPY…LRSL). The tract at residues 94–167 (SCKKRSPEEI…DNSRSRSRSF (74 aa)) is sufficient for interaction with human 14-3-3 beta protein. Positions 97-167 (KRSPEEIEGA…DNSRSRSRSF (71 aa)) are disordered. Residues 122–135 (ESASPQASPTSSTL) are compositionally biased toward low complexity. A Phosphorylation-dependent binding motif motif is present at residues 161–166 (RSRSRS). Serine 166 bears the Phosphoserine mark.

As to quaternary structure, in infected HeLa cells colocalizes with host 14-3-3 protein (YWHAB); phosphorylation of Ser-166 is probably required. Interacts with Pkn1. Phosphorylated, possibly at more than one position, in infected HeLa cells. Phosphorylated by chlamydial kinase Pnk1.

The protein localises to the secreted. It is found in the host vacuole. The protein resides in the host pathogen-containing vacuole. It localises to the host pathogen-containing vacuole membrane. Functionally, inclusion membrane protein probably involved in early modification events of the chlamydial inclusion. This is Inclusion membrane protein G from Chlamydia trachomatis serovar L2 (strain ATCC VR-902B / DSM 19102 / 434/Bu).